Here is an 88-residue protein sequence, read N- to C-terminus: FXYD domain-containing ion transport regulator 3 (88 aa).

Positions Met-1–Ala-20 form a signal peptide, not cleaved. Topologically, residues Met-1–Arg-38 are extracellular. Residues Val-39–Gly-59 traverse the membrane as a helical segment. Residues Lys-60–Cys-88 are Cytoplasmic-facing. The interval Gln-67–Cys-88 is disordered.

It belongs to the FXYD family. In terms of assembly, regulatory subunit of the sodium/potassium-transporting ATPase which is composed of a catalytic alpha subunit, a non-catalytic beta subunit and an additional regulatory subunit. Interacts with catalytic alpha subunit ATP1A1. Also interacts with non-catalytic beta subunit ATP1B1. Interacts with the ATP1A1-ATP1B1, ATP1A2-ATP1B1 and ATP1A3-ATP1B1 NKA isozymes. In terms of processing, glutathionylated. As to expression, expressed at high levels in heart, skeletal muscle and liver with low levels of expression in breast, brain, lung, stomach and colon. In the gastric gland, mainly expressed in the mucus cells forming the upper part of the gland and is absent from the parietal cells.

The protein localises to the cell membrane. In terms of biological role, associates with and regulates the activity of the sodium/potassium-transporting ATPase (NKA) which transports Na(+) out of the cell and K(+) into the cell. Reduces glutathionylation of the NKA beta-1 subunit ATP1B1, thus reversing glutathionylation-mediated inhibition of ATP1B1. Induces a hyperpolarization-activated chloride current when expressed in Xenopus oocytes. In Mus musculus (Mouse), this protein is FXYD domain-containing ion transport regulator 3 (Fxyd3).